The sequence spans 236 residues: Leucyl/phenylalanyl-tRNA--protein transferase (236 aa).

The protein belongs to the L/F-transferase family.

It localises to the cytoplasm. It carries out the reaction N-terminal L-lysyl-[protein] + L-leucyl-tRNA(Leu) = N-terminal L-leucyl-L-lysyl-[protein] + tRNA(Leu) + H(+). The enzyme catalyses N-terminal L-arginyl-[protein] + L-leucyl-tRNA(Leu) = N-terminal L-leucyl-L-arginyl-[protein] + tRNA(Leu) + H(+). It catalyses the reaction L-phenylalanyl-tRNA(Phe) + an N-terminal L-alpha-aminoacyl-[protein] = an N-terminal L-phenylalanyl-L-alpha-aminoacyl-[protein] + tRNA(Phe). Its function is as follows. Functions in the N-end rule pathway of protein degradation where it conjugates Leu, Phe and, less efficiently, Met from aminoacyl-tRNAs to the N-termini of proteins containing an N-terminal arginine or lysine. This Aliivibrio salmonicida (strain LFI1238) (Vibrio salmonicida (strain LFI1238)) protein is Leucyl/phenylalanyl-tRNA--protein transferase.